A 422-amino-acid chain; its full sequence is 2-oxoglutarate and iron-dependent oxygenase JMJD4 (422 aa).

One can recognise a JmjC domain in the interval 139–298 (QRNFPEHNIY…IMWQFLQDEL (160 aa)). Fe cation contacts are provided by H186, D188, and H266.

The protein belongs to the JMJD6 family. The cofactor is Fe(2+).

Its subcellular location is the cytoplasm. The catalysed reaction is L-lysyl-[protein] + 2-oxoglutarate + O2 = 4-hydroxy-L-lysyl-[protein] + succinate + CO2. Functionally, catalyzes the 2-oxoglutarate and iron-dependent C4-lysyl hydroxylation of ETF1 at 'Lys-63' thereby promoting the translational termination efficiency of ETF1. The polypeptide is 2-oxoglutarate and iron-dependent oxygenase JMJD4 (jmjd4) (Danio rerio (Zebrafish)).